Consider the following 174-residue polypeptide: DNA replication protein 17 (174 aa).

The protein belongs to the phi29likevirus protein p56 family. Homodimer. Interacts with the histone-like protein p6; this interaction optimizes the binding of protein p6 at the viral DNA ends, thus favoring the initiation of replication.

Functionally, involved in the replication of viral DNA. It is required at the very beginning of the virus amplification, conditions in which a low number of viral DNA molecules enter the host cell, possibly to recruit the limiting amount of initiation factors at the replication origins. Once the infection process is established and the other replication proteins reach optimal concentration, it becomes dispensable. Optimizes the binding of protein p6 at the viral DNA ends, thus favoring the initiation of replication. This Bacillus subtilis (Bacteriophage PZA) protein is DNA replication protein 17 (17).